A 785-amino-acid polypeptide reads, in one-letter code: Endonuclease MutS2 (785 aa).

334-341 (GPNTGGKT) contacts ATP. Residues 710–785 (LDLRGYNVED…GVGATIAELK (76 aa)) form the Smr domain.

This sequence belongs to the DNA mismatch repair MutS family. MutS2 subfamily. In terms of assembly, homodimer. Binds to stalled ribosomes, contacting rRNA.

Its function is as follows. Endonuclease that is involved in the suppression of homologous recombination and thus may have a key role in the control of bacterial genetic diversity. In terms of biological role, acts as a ribosome collision sensor, splitting the ribosome into its 2 subunits. Detects stalled/collided 70S ribosomes which it binds and splits by an ATP-hydrolysis driven conformational change. Acts upstream of the ribosome quality control system (RQC), a ribosome-associated complex that mediates the extraction of incompletely synthesized nascent chains from stalled ribosomes and their subsequent degradation. Probably generates substrates for RQC. This Brevibacillus brevis (strain 47 / JCM 6285 / NBRC 100599) protein is Endonuclease MutS2.